We begin with the raw amino-acid sequence, 429 residues long: tRNA(Ile2) 2-agmatinylcytidine synthetase TiaS (429 aa).

Positions 403-429 are disordered; sequence KPPERPLHPSKSLEPPSTPIHSDTISL.

The protein belongs to the TiaS family.

The protein resides in the cytoplasm. It catalyses the reaction cytidine(34) in tRNA(Ile2) + agmatine + ATP + H2O = 2-agmatinylcytidine(34) in tRNA(Ile2) + AMP + 2 phosphate + 2 H(+). Functionally, ATP-dependent agmatine transferase that catalyzes the formation of 2-agmatinylcytidine (agm2C) at the wobble position (C34) of tRNA(Ile2), converting the codon specificity from AUG to AUA. The chain is tRNA(Ile2) 2-agmatinylcytidine synthetase TiaS from Hyperthermus butylicus (strain DSM 5456 / JCM 9403 / PLM1-5).